The sequence spans 448 residues: Probable D-serine dehydratase (448 aa).

Lysine 119 carries the N6-(pyridoxal phosphate)lysine modification.

Belongs to the serine/threonine dehydratase family. DsdA subfamily. It depends on pyridoxal 5'-phosphate as a cofactor.

The enzyme catalyses D-serine = pyruvate + NH4(+). The protein is Probable D-serine dehydratase of Chromobacterium violaceum (strain ATCC 12472 / DSM 30191 / JCM 1249 / CCUG 213 / NBRC 12614 / NCIMB 9131 / NCTC 9757 / MK).